A 740-amino-acid polypeptide reads, in one-letter code: Ethylene receptor 1 (740 aa).

The next 3 membrane-spanning stretches (helical) occupy residues 23 to 43 (ISDFFIAVAYFSIPLELIYFV), 53 to 73 (WVLVQFGAFIVLCGATHLINL), and 95 to 115 (AAVSCVTALMLVHIIPDLLSV). Residues C65 and H69 each contribute to the Cu cation site. A GAF domain is found at 158-307 (DRHTILKTTL…VVADQVAVAL (150 aa)). One can recognise a Histidine kinase domain in the interval 350–587 (VMNHEMRTPM…TVTFVVKLGI (238 aa)). H353 carries the post-translational modification Phosphohistidine; by autocatalysis. Positions 615 to 732 (KVLLMDENGI…KMRNVLSKLL (118 aa)) constitute a Response regulatory domain. D663 carries the 4-aspartylphosphate modification.

It belongs to the ethylene receptor family. As to quaternary structure, homodimer; disulfide-linked. Requires Cu cation as cofactor. Activation probably requires a transfer of a phosphate group between a His in the transmitter domain and an Asp of the receiver domain.

It is found in the endoplasmic reticulum membrane. It carries out the reaction ATP + protein L-histidine = ADP + protein N-phospho-L-histidine.. In terms of biological role, may act early in the ethylene signal transduction pathway, possibly as an ethylene receptor, or as a regulator of the pathway. This Pelargonium hortorum (Common geranium) protein is Ethylene receptor 1 (ETR1).